The chain runs to 370 residues: uncharacterized protein (370 aa).

This is an uncharacterized protein from Acanthamoeba polyphaga (Amoeba).